The following is a 126-amino-acid chain: Desulfoferrodoxin (126 aa).

9 residues coordinate Fe cation: C10, C13, C29, C30, H49, H69, H75, C116, and H119.

The protein belongs to the desulfoferrodoxin family. As to quaternary structure, homodimer. Fe(3+) serves as cofactor. Cu(2+) is required as a cofactor.

The enzyme catalyses reduced [rubredoxin] + superoxide + 2 H(+) = oxidized [rubredoxin] + H2O2. Catalyzes the one-electron reduction of superoxide anion radical to hydrogen peroxide at a nonheme ferrous iron center. Plays a fundamental role in case of oxidative stress via its superoxide detoxification activity. The protein is Desulfoferrodoxin (dfx) of Desulfarculus baarsii (strain ATCC 33931 / DSM 2075 / LMG 7858 / VKM B-1802 / 2st14).